The following is a 480-amino-acid chain: Citrate synthase 1, peroxisomal (480 aa).

Catalysis depends on residues His-321, His-360, and Asp-416.

It belongs to the citrate synthase family. In terms of tissue distribution, expressed only in siliques. Not expressed in flower, stem, cauline leaf, young leaf, mature leaf and senescent leaf.

It is found in the peroxisome. The catalysed reaction is oxaloacetate + acetyl-CoA + H2O = citrate + CoA + H(+). The protein operates within carbohydrate metabolism; tricarboxylic acid cycle; isocitrate from oxaloacetate: step 1/2. This is Citrate synthase 1, peroxisomal (CSY1) from Arabidopsis thaliana (Mouse-ear cress).